Reading from the N-terminus, the 301-residue chain is ATP synthase subunit gamma, mitochondrial (301 aa).

Belongs to the ATPase gamma chain family. In terms of assembly, F-type ATPases have 2 components, CF(1) - the catalytic core - and CF(0) - the membrane proton channel. CF(1) has five subunits: alpha(3), beta(3), gamma(1), delta(1), epsilon(1). CF(0) has three main subunits: a, b and c.

The protein localises to the mitochondrion. Its subcellular location is the mitochondrion inner membrane. Functionally, mitochondrial membrane ATP synthase (F(1)F(0) ATP synthase or Complex V) produces ATP from ADP in the presence of a proton gradient across the membrane which is generated by electron transport complexes of the respiratory chain. F-type ATPases consist of two structural domains, F(1) - containing the extramembraneous catalytic core, and F(0) - containing the membrane proton channel, linked together by a central stalk and a peripheral stalk. During catalysis, ATP synthesis in the catalytic domain of F(1) is coupled via a rotary mechanism of the central stalk subunits to proton translocation. Part of the complex F(1) domain and the central stalk which is part of the complex rotary element. The gamma subunit protrudes into the catalytic domain formed of alpha(3)beta(3). Rotation of the central stalk against the surrounding alpha(3)beta(3) subunits leads to hydrolysis of ATP in three separate catalytic sites on the beta subunits. This is ATP synthase subunit gamma, mitochondrial (atp3) from Schizosaccharomyces pombe (strain 972 / ATCC 24843) (Fission yeast).